We begin with the raw amino-acid sequence, 1954 residues long: MRGPVGTEEELPRLFAEEMENEDEMSEEEDGGLEAFDDFFPVEPVSLPKKKKPKKLKENKCKGKRKKKEGSNDELSENEEDLEEKSESEGSDYSPNKKKKKKLKDKKEKKAKRKKKDEDEDDNDDGCLKEPKSSGQLMAEWGLDDVDYLFSEEDYHTLTNYKAFSQFLRPLIAKKNPKIPMSKMMTVLGAKWREFSANNPFKGSSAAAAAAAVAAAVETVTISPPLAVSPPQVPQPVPIRKAKTKEGKGPGVRKKIKGSKDGKKKGKGKKTAGLKFRFGGISNKRKKGSSSEEDEREESDFDSASIHSASVRSECSAALGKKSKRRRKKKRIDDGDGYETDHQDYCEVCQQGGEIILCDTCPRAYHLVCLDPELEKAPEGKWSCPHCEKEGIQWEPKDDDDEEEEGGCEEEEDDHMEFCRVCKDGGELLCCDACPSSYHLHCLNPPLPEIPNGEWLCPRCTCPPLKGKVQRILHWRWTEPPAPFMVGLPGPDVEPSLPPPKPLEGIPEREFFVKWAGLSYWHCSWVKELQLELYHTVMYRNYQRKNDMDEPPPFDYGSGDEDGKSEKRKNKDPLYAKMEERFYRYGIKPEWMMIHRILNHSFDKKGDVHYLIKWKDLPYDQCTWEIDDIDIPYYDNLKQAYWGHRELMLGEDTRLPKRLLKKGKKLRDDKQEKPPDTPIVDPTVKFDKQPWYIDSTGGTLHPYQLEGLNWLRFSWAQGTDTILADEMGLGKTVQTIVFLYSLYKEGHSKGPYLVSAPLSTIINWEREFEMWAPDFYVVTYTGDKESRSVIRENEFSFEDNAIRSGKKVFRMKKEVQIKFHVLLTSYELITIDQAILGSIEWACLVVDEAHRLKNNQSKFFRVLNSYKIDYKLLLTGTPLQNNLEELFHLLNFLTPERFNNLEGFLEEFADISKEDQIKKLHDLLGPHMLRRLKADVFKNMPAKTELIVRVELSQMQKKYYKFILTRNFEALNSKGGGNQVSLLNIMMDLKKCCNHPYLFPVAAVEAPVLPNGSYDGSSLVKSSGKLMLLQKMLKKLRDEGHRVLIFSQMTKMLDLLEDFLEYEGYKYERIDGGITGGLRQEAIDRFNAPGAQQFCFLLSTRAGGLGINLATADTVIIYDSDWNPHNDIQAFSRAHRIGQNKKVMIYRFVTRASVEERITQVAKRKMMLTHLVVRPGLGSKSGSMTKQELDDILKFGTEELFKDDVEGMMSQGQRPVTPIPDVQSSKGGNLAASAKKKHGSTPPGDNKDVEDSSVIHYDDAAISKLLDRNQDATDDTELQNMNEYLSSFKVAQYVVREEDGVEEVEREIIKQEENVDPDYWEKLLRHHYEQQQEDLARNLGKGKRIRKQVNYNDASQEDQEWQDELSDNQSEYSIGSEDEDEDFEERPEGQSGRRQSRRQLKSDRDKPLPPLLARVGGNIEVLGFNARQRKAFLNAIMRWGMPPQDAFNSHWLVRDLRGKSEKEFRAYVSLFMRHLCEPGADGAETFADGVPREGLSRQHVLTRIGVMSLVRKKVQEFEHVNGKYSTPDLIPEGPEGKKSGEVISSDPNTPVPASPAHLLPAPLGLPDKMEAQLGYMDEKDPGAQKPRQPLEVQALPAALDRVESEDKHESPASKERAREERPEETEKAPPSPEQLPREEVLPEKEKILDKLELSLIHSRGDSSELRPDDTKAEEKEPIETQQNGDKEEDDEGKKEDKKGKFKFMFNIADGGFTELHTLWQNEERAAVSSGKIYDIWHRRHDYWLLAGIVTHGYARWQDIQNDPRYMILNEPFKSEVHKGNYLEMKNKFLARRFKLLEQALVIEEQLRRAAYLNMTQDPNHPAMALNARLAEVECLAESHQHLSKESLAGNKPANAVLHKVLNQLEELLSDMKADVTRLPSMLSRIPPVAARLQMSERSILSRLTNRAGDPTIQQGAFGSSQMYSNNFGPNFRGPGPGGIVNYNQMPLGPYVTDI.

Disordered regions lie at residues 1–134 and 225–338; these read MRGP…PKSS and PLAV…GDGY. Composition is skewed to acidic residues over residues 17–37 and 72–90; these read EEMENEDEMSEEEDGGLEAFD and NDELSENEEDLEEKSESEG. Positions 96-115 are enriched in basic residues; it reads NKKKKKKLKDKKEKKAKRKK. Residues 227-237 show a composition bias toward pro residues; that stretch reads AVSPPQVPQPV. Over residues 251-272 the composition is skewed to basic residues; sequence GVRKKIKGSKDGKKKGKGKKTA. Over residues 291–301 the composition is skewed to acidic residues; that stretch reads SEEDEREESDF. A compositionally biased stretch (basic residues) spans 321–330; that stretch reads KKSKRRRKKK. PHD-type zinc fingers lie at residues 343-390 and 416-463; these read QDYC…CEKE and MEFC…CTCP. The segment at 343-653 is histone-binding; the sequence is QDYCEVCQQG…HRELMLGEDT (311 aa). The 58-residue stretch at 497–554 folds into the Chromo 1 domain; it reads LPPPKPLEGIPEREFFVKWAGLSYWHCSWVKELQLELYHTVMYRNYQRKNDMDEPPPF. The interval 549 to 571 is disordered; that stretch reads DEPPPFDYGSGDEDGKSEKRKNK. Residues 561-571 show a composition bias toward basic and acidic residues; sequence EDGKSEKRKNK. Positions 592 to 653 constitute a Chromo 2 domain; the sequence is MMIHRILNHS…HRELMLGEDT (62 aa). The Helicase ATP-binding domain occupies 712–896; that stretch reads RFSWAQGTDT…FHLLNFLTPE (185 aa). Residue 725–732 participates in ATP binding; sequence DEMGLGKT. The DEAH box signature appears at 847 to 850; it reads DEAH. The 166-residue stretch at 1028-1193 folds into the Helicase C-terminal domain; that stretch reads LLQKMLKKLR…MTKQELDDIL (166 aa). Disordered regions lie at residues 1209-1253, 1351-1411, 1524-1564, 1597-1640, and 1658-1696; these read MSQG…EDSS, YNDA…LPPL, YSTP…APLG, AALD…REEV, and SRGDSSELRPDDTKAEEKEPIETQQNGDKEEDDEGKKED. 2 stretches are compositionally biased toward acidic residues: residues 1355-1366 and 1376-1385; these read SQEDQEWQDELS and SEDEDEDFEE. Q1390 carries the post-translational modification N5-methylglutamine. Phosphoserine is present on S1554. Residues 1554 to 1564 show a composition bias toward low complexity; it reads SPAHLLPAPLG. 2 stretches are compositionally biased toward basic and acidic residues: residues 1600-1627 and 1658-1678; these read DRVESEDKHESPASKERAREERPEETEK and SRGDSSELRPDDTKAEEKEPI.

The protein belongs to the SNF2/RAD54 helicase family. In terms of assembly, component of the nucleosome remodeling and deacetylase (NuRD) repressor complex, composed of core proteins MTA1, MTA2, MTA3, RBBP4, RBBP7, HDAC1, HDAC2, MBD2, MBD3, and peripherally associated proteins CDK2AP1, CDK2AP2, GATAD2A, GATAD2B, CHD3, CHD4 and CHD5. The exact stoichiometry of the NuRD complex is unknown, and some subunits such as MBD2 and MBD3, GATAD2A and GATAD2B, and CHD3, CHD4 and CHD5 define mutually exclusive NuRD complexes. Interacts with HDAC2. In terms of processing, methylated at Gln-1390 by N6AMT1. Preferentially expressed in total brain, fetal brain, and cerebellum. It is also moderately expressed in the adrenal gland and detected in testis.

The protein localises to the nucleus. The protein resides in the chromosome. It catalyses the reaction ATP + H2O = ADP + phosphate + H(+). ATP-dependent chromatin-remodeling factor that binds DNA through histones and regulates gene transcription. May specifically recognize and bind trimethylated 'Lys-27' (H3K27me3) and non-methylated 'Lys-4' of histone H3. Acts as a component of the histone deacetylase NuRD complex which participates in the remodeling of chromatin. Plays a role in the development of the nervous system by activating the expression of genes promoting neuron terminal differentiation. In parallel, it may also positively regulate the trimethylation of histone H3 at 'Lys-27' thereby specifically repressing genes that promote the differentiation into non-neuronal cell lineages. Regulates the expression of genes involved in cell proliferation and differentiation. Downstream activated genes may include CDKN2A that positively regulates the p53/TP53 pathway, which in turn, prevents cell proliferation. In spermatogenesis, it probably regulates histone hyperacetylation and the replacement of histones by transition proteins in chromatin, a crucial step in the condensation of spermatid chromatin and the production of functional spermatozoa. This chain is Chromodomain-helicase-DNA-binding protein 5, found in Homo sapiens (Human).